Consider the following 359-residue polypeptide: Heat-inducible transcription repressor HrcA (359 aa).

Belongs to the HrcA family.

In terms of biological role, negative regulator of class I heat shock genes (grpE-dnaK-dnaJ and groELS operons). Prevents heat-shock induction of these operons. In Rhizobium meliloti (strain 1021) (Ensifer meliloti), this protein is Heat-inducible transcription repressor HrcA.